The sequence spans 92 residues: MARSIKKGPFIEKSLYQKVLASSGREKRVVIKTYSRASTIIPEMVSLTISVYNGKSFIPVYITEDLVGHKLGEFSPTRIFRGHAKSDKKGRK.

The protein belongs to the universal ribosomal protein uS19 family.

In terms of biological role, protein S19 forms a complex with S13 that binds strongly to the 16S ribosomal RNA. This is Small ribosomal subunit protein uS19 from Borrelia hermsii (strain HS1 / DAH).